Here is a 162-residue protein sequence, read N- to C-terminus: Cyanate hydratase (162 aa).

Residues arginine 103, glutamate 106, and serine 129 contribute to the active site.

Belongs to the cyanase family.

It catalyses the reaction cyanate + hydrogencarbonate + 3 H(+) = NH4(+) + 2 CO2. Catalyzes the reaction of cyanate with bicarbonate to produce ammonia and carbon dioxide. The protein is Cyanate hydratase of Pyrenophora tritici-repentis (strain Pt-1C-BFP) (Wheat tan spot fungus).